A 427-amino-acid chain; its full sequence is Enolase (427 aa).

A (2R)-2-phosphoglycerate-binding site is contributed by Gln-163. Glu-205 functions as the Proton donor in the catalytic mechanism. 3 residues coordinate Mg(2+): Asp-242, Glu-285, and Asp-312. (2R)-2-phosphoglycerate contacts are provided by Lys-337, Arg-366, Ser-367, and Lys-388. Lys-337 (proton acceptor) is an active-site residue.

The protein belongs to the enolase family. Mg(2+) is required as a cofactor.

The protein resides in the cytoplasm. It localises to the secreted. The protein localises to the cell surface. The catalysed reaction is (2R)-2-phosphoglycerate = phosphoenolpyruvate + H2O. Its pathway is carbohydrate degradation; glycolysis; pyruvate from D-glyceraldehyde 3-phosphate: step 4/5. In terms of biological role, catalyzes the reversible conversion of 2-phosphoglycerate (2-PG) into phosphoenolpyruvate (PEP). It is essential for the degradation of carbohydrates via glycolysis. The polypeptide is Enolase (Burkholderia thailandensis (strain ATCC 700388 / DSM 13276 / CCUG 48851 / CIP 106301 / E264)).